Reading from the N-terminus, the 833-residue chain is DNA gyrase subunit A (833 aa).

The region spanning Leu-35–Leu-498 is the Topo IIA-type catalytic domain. Tyr-123 acts as the O-(5'-phospho-DNA)-tyrosine intermediate in catalysis. Positions Gln-525–Gly-531 match the GyrA-box motif. The tract at residues Arg-803–Glu-833 is disordered. Residues Ile-806 to Arg-821 show a composition bias toward acidic residues.

This sequence belongs to the type II topoisomerase GyrA/ParC subunit family. As to quaternary structure, heterotetramer, composed of two GyrA and two GyrB chains. In the heterotetramer, GyrA contains the active site tyrosine that forms a transient covalent intermediate with DNA, while GyrB binds cofactors and catalyzes ATP hydrolysis.

It is found in the cytoplasm. The enzyme catalyses ATP-dependent breakage, passage and rejoining of double-stranded DNA.. A type II topoisomerase that negatively supercoils closed circular double-stranded (ds) DNA in an ATP-dependent manner to modulate DNA topology and maintain chromosomes in an underwound state. Negative supercoiling favors strand separation, and DNA replication, transcription, recombination and repair, all of which involve strand separation. Also able to catalyze the interconversion of other topological isomers of dsDNA rings, including catenanes and knotted rings. Type II topoisomerases break and join 2 DNA strands simultaneously in an ATP-dependent manner. The polypeptide is DNA gyrase subunit A (Halalkalibacterium halodurans (strain ATCC BAA-125 / DSM 18197 / FERM 7344 / JCM 9153 / C-125) (Bacillus halodurans)).